Reading from the N-terminus, the 197-residue chain is Recombination protein RecR (197 aa).

A C4-type zinc finger spans residues 57–72 (CSTCFGITESDPCHLC). The Toprim domain maps to 79–174 (ASICVVEEPQ…KVTRLAHGIP (96 aa)).

Belongs to the RecR family.

Its function is as follows. May play a role in DNA repair. It seems to be involved in an RecBC-independent recombinational process of DNA repair. It may act with RecF and RecO. The chain is Recombination protein RecR from Geotalea uraniireducens (strain Rf4) (Geobacter uraniireducens).